The sequence spans 71 residues: UPF0435 protein SERP1418 (71 aa).

Belongs to the UPF0435 family.

The protein is UPF0435 protein SERP1418 of Staphylococcus epidermidis (strain ATCC 35984 / DSM 28319 / BCRC 17069 / CCUG 31568 / BM 3577 / RP62A).